A 94-amino-acid chain; its full sequence is Cell division protein CrgA (94 aa).

2 helical membrane passes run 31–51 and 71–91; these read VWFVALFVGLMLIGLIWLLVF and LGPWNYAIAFAFMITGLLLTM.

Belongs to the CrgA family.

The protein localises to the cell membrane. In terms of biological role, involved in cell division. This is Cell division protein CrgA from Mycobacterium sp. (strain JLS).